The primary structure comprises 269 residues: Aquaporin-1 (269 aa).

Over 1-11 (MASEFKKKLFW) the chain is Cytoplasmic. Residues 12–29 (RAVVAEFLAMTLFVFISI) traverse the membrane as a helical segment. Residues 30–46 (GSALGFKYPVGNNQTAV) lie on the Extracellular side of the membrane. N-linked (GlcNAc...) asparagine glycosylation occurs at Asn42. Residues 47-65 (QDNVKVSLAFGLSIATLAQ) form a helical membrane-spanning segment. Over 66–68 (SVG) the chain is Cytoplasmic. Residues 69 to 82 (HISGAHLNPAVTLG) lie within the membrane without spanning it. An NPA 1 motif is present at residues 76–78 (NPA). The Cytoplasmic segment spans residues 83-90 (LLLSCQIS). Residues 91 to 109 (IFRALMYIIAQCVGAIVAT) form a helical membrane-spanning segment. The Extracellular portion of the chain corresponds to 110–133 (AILSGITSSLPGNSLGRNDLADGV). A helical membrane pass occupies residues 134 to 153 (NSGQGLGIEIIGTLQLVLCV). Residues 154-163 (LATTDRRRRD) are Cytoplasmic-facing. Residues 164–181 (LGGSAPLAIGLSVALGHL) traverse the membrane as a helical segment. Topologically, residues 182–186 (LAIDY) are extracellular. Residues 187 to 199 (TGCGINPARSFGS) lie within the membrane without spanning it. The short motif at 192–194 (NPA) is the NPA 2 element. Topologically, residues 200–206 (AVITHNF) are extracellular. Asn205 is a glycosylation site (N-linked (GlcNAc...) asparagine). The helical transmembrane segment at 207-224 (SNHWIFWVGPFIGGALAV) threads the bilayer. Residues 225 to 269 (LIYDFILAPRSSDFTDRVKVWTSGQVEEYDLDADDINSRVEMKPK) lie on the Cytoplasmic side of the membrane. Ser247 is subject to Phosphoserine. Tyr253 is subject to Phosphotyrosine. Phosphoserine is present on Ser262.

The protein belongs to the MIP/aquaporin (TC 1.A.8) family. In terms of assembly, homotetramer; each monomer provides an independent water pore. Component of the ankyrin-1 complex in the erythrocyte, composed of ANK1, RHCE, RHAG, SLC4A1, EPB42, GYPA, GYPB and AQP1. Interacts with EPHB2; involved in endolymph production in the inner ear. Identified in a complex with STOM. Interacts (via the N-terminal) with ANK1 (via ANK 1-5 repeats). Interacts (via the C-terminal) with EPB42.

The protein resides in the cell membrane. The catalysed reaction is H2O(in) = H2O(out). It catalyses the reaction nitric oxide(out) = nitric oxide(in). It carries out the reaction CO2(out) = CO2(in). The enzyme catalyses glycerol(in) = glycerol(out). The catalysed reaction is H2O2(out) = H2O2(in). It catalyses the reaction K(+)(in) = K(+)(out). It carries out the reaction Na(+)(in) = Na(+)(out). Its function is as follows. Forms a water channel that facilitates the transport of water across cell membranes, playing a crucial role in water homeostasis in various tissues. Could also be permeable to small solutes including hydrogen peroxide, glycerol and gases such as amonnia (NH3), nitric oxide (NO) and carbon dioxide (CO2). Recruited to the ankyrin-1 complex, a multiprotein complex of the erythrocyte membrane, it could be part of a CO2 metabolon, linking facilitated diffusion of CO2 across the membrane, anion exchange of Cl(-)/HCO3(-) and interconversion of dissolved CO2 and carbonic acid in the cytosol. In vitro, it shows non-selective gated cation channel activity and may be permeable to cations like K(+) and Na(+) in vivo. The polypeptide is Aquaporin-1 (Pongo abelii (Sumatran orangutan)).